A 211-amino-acid polypeptide reads, in one-letter code: Endonuclease III (211 aa).

One can recognise a HhH domain in the interval 111 to 130 (AHALESLPGVGHKTANVVLN). Residues cysteine 190, cysteine 197, cysteine 200, and cysteine 206 each coordinate [4Fe-4S] cluster.

This sequence belongs to the Nth/MutY family. [4Fe-4S] cluster is required as a cofactor.

The catalysed reaction is 2'-deoxyribonucleotide-(2'-deoxyribose 5'-phosphate)-2'-deoxyribonucleotide-DNA = a 3'-end 2'-deoxyribonucleotide-(2,3-dehydro-2,3-deoxyribose 5'-phosphate)-DNA + a 5'-end 5'-phospho-2'-deoxyribonucleoside-DNA + H(+). Its function is as follows. DNA repair enzyme that has both DNA N-glycosylase activity and AP-lyase activity. The DNA N-glycosylase activity releases various damaged pyrimidines from DNA by cleaving the N-glycosidic bond, leaving an AP (apurinic/apyrimidinic) site. The AP-lyase activity cleaves the phosphodiester bond 3' to the AP site by a beta-elimination, leaving a 3'-terminal unsaturated sugar and a product with a terminal 5'-phosphate. The sequence is that of Endonuclease III from Treponema pallidum (strain Nichols).